Consider the following 399-residue polypeptide: Probable protein phosphatase 2C 28 (399 aa).

The region spanning 48-356 is the PPM-type phosphatase domain; the sequence is EFSMAVVQAN…DDITVIVVFL (309 aa). Mn(2+) is bound by residues Asp-87, Gly-88, Asp-288, and Asp-347.

It belongs to the PP2C family. Mg(2+) serves as cofactor. Mn(2+) is required as a cofactor.

The catalysed reaction is O-phospho-L-seryl-[protein] + H2O = L-seryl-[protein] + phosphate. The enzyme catalyses O-phospho-L-threonyl-[protein] + H2O = L-threonyl-[protein] + phosphate. The polypeptide is Probable protein phosphatase 2C 28 (Oryza sativa subsp. japonica (Rice)).